The sequence spans 378 residues: Beta sliding clamp (378 aa).

Belongs to the beta sliding clamp family. As to quaternary structure, forms a ring-shaped head-to-tail homodimer around DNA which binds and tethers DNA polymerases and other proteins to the DNA. The DNA replisome complex has a single clamp-loading complex (3 tau and 1 each of delta, delta', psi and chi subunits) which binds 3 Pol III cores (1 core on the leading strand and 2 on the lagging strand) each with a beta sliding clamp dimer. Additional proteins in the replisome are other copies of gamma, psi and chi, Ssb, DNA helicase and RNA primase.

The protein localises to the cytoplasm. Its function is as follows. Confers DNA tethering and processivity to DNA polymerases and other proteins. Acts as a clamp, forming a ring around DNA (a reaction catalyzed by the clamp-loading complex) which diffuses in an ATP-independent manner freely and bidirectionally along dsDNA. Initially characterized for its ability to contact the catalytic subunit of DNA polymerase III (Pol III), a complex, multichain enzyme responsible for most of the replicative synthesis in bacteria; Pol III exhibits 3'-5' exonuclease proofreading activity. The beta chain is required for initiation of replication as well as for processivity of DNA replication. The protein is Beta sliding clamp (dnaN) of Streptococcus pneumoniae (strain ATCC BAA-255 / R6).